We begin with the raw amino-acid sequence, 1026 residues long: DNA polymerase catalytic subunit (1026 aa).

The stretch at 664-695 (LKTWLAKRKSIKKELEQCQDAKMKTILDKQQL) forms a coiled coil.

It belongs to the DNA polymerase type-B family.

The protein localises to the host nucleus. It catalyses the reaction DNA(n) + a 2'-deoxyribonucleoside 5'-triphosphate = DNA(n+1) + diphosphate. In terms of biological role, replicates viral genomic DNA. This Alcelaphine herpesvirus 1 (strain C500) (AlHV-1) protein is DNA polymerase catalytic subunit (9).